We begin with the raw amino-acid sequence, 180 residues long: Large ribosomal subunit protein uL5 (180 aa).

This sequence belongs to the universal ribosomal protein uL5 family. Part of the 50S ribosomal subunit; part of the 5S rRNA/L5/L18/L25 subcomplex. Contacts the 5S rRNA and the P site tRNA. Forms a bridge to the 30S subunit in the 70S ribosome.

Its function is as follows. This is one of the proteins that bind and probably mediate the attachment of the 5S RNA into the large ribosomal subunit, where it forms part of the central protuberance. In the 70S ribosome it contacts protein S13 of the 30S subunit (bridge B1b), connecting the 2 subunits; this bridge is implicated in subunit movement. Contacts the P site tRNA; the 5S rRNA and some of its associated proteins might help stabilize positioning of ribosome-bound tRNAs. This chain is Large ribosomal subunit protein uL5, found in Brevibacillus brevis (strain 47 / JCM 6285 / NBRC 100599).